We begin with the raw amino-acid sequence, 458 residues long: Divalent metal cation transporter MntH (458 aa).

11 helical membrane-spanning segments follow: residues Gly38–Met58, Ser76–Ala96, Gly119–Ile139, Met151–Met171, Ala180–Ala200, Met223–Gly243, Leu275–Gly295, Ile315–Ser335, Leu370–Ile390, Leu393–Val413, and Phe437–Val457.

Belongs to the NRAMP family.

The protein localises to the cell membrane. H(+)-stimulated, divalent metal cation uptake system. The chain is Divalent metal cation transporter MntH from Lacticaseibacillus casei (strain BL23) (Lactobacillus casei).